Here is a 486-residue protein sequence, read N- to C-terminus: Intermediate cleaving peptidase 55 (486 aa).

The N-terminal 19 residues, 1–19 (MSGYIRTLFIRNRFSNYRL), are a transit peptide targeting the mitochondrion. Residues Asp-317, Asp-328, His-407, Glu-434, and Glu-457 each contribute to the Mn(2+) site.

It belongs to the peptidase M24B family. Mn(2+) is required as a cofactor.

It is found in the mitochondrion inner membrane. The enzyme catalyses The enzyme cleaves the 36-Pro-Pro-37 bond of cysteine desulfurase (EC 2.8.1.7) removing three amino acid residues (Tyr-Ser-Pro) from the N-terminus after cleavage by mitochondrial processing peptidase.. Functionally, aminopeptidase which cleaves preprotein intermediates that carry destabilizing N-ter amino acid residues after the mitochondrial processing peptidase (MPP) cleavage site and is thus critical for stabilization of the mitochondrial proteome. In Schizosaccharomyces pombe (strain 972 / ATCC 24843) (Fission yeast), this protein is Intermediate cleaving peptidase 55 (icp55).